The following is a 585-amino-acid chain: Glutamate decarboxylase (585 aa).

Over residues 35-56 (KSAVQSGHQGSNNMRDTSSQGM) the composition is skewed to polar residues. Residues 35-60 (KSAVQSGHQGSNNMRDTSSQGMANKY) are disordered. At Lys318 the chain carries N6-(pyridoxal phosphate)lysine.

Belongs to the group II decarboxylase family. Pyridoxal 5'-phosphate serves as cofactor.

It catalyses the reaction L-glutamate + H(+) = 4-aminobutanoate + CO2. The sequence is that of Glutamate decarboxylase (GAD1) from Saccharomyces cerevisiae (strain ATCC 204508 / S288c) (Baker's yeast).